The following is a 420-amino-acid chain: Acetyl-CoA acetyltransferase B, mitochondrial (420 aa).

The N-terminal 33 residues, M1–N33, are a transit peptide targeting the mitochondrion. The active-site Acyl-thioester intermediate is C119. CoA is bound by residues Y212, R251–D253, and K256. Position 212 (Y212) interacts with K(+). Residues A273 and A274 each coordinate K(+). S277 is a CoA binding site. V374 is a binding site for K(+). The Proton donor/acceptor role is filled by C406.

Belongs to the thiolase-like superfamily. Thiolase family. Homotetramer.

Its subcellular location is the mitochondrion. It carries out the reaction 2 acetyl-CoA = acetoacetyl-CoA + CoA. The catalysed reaction is propanoyl-CoA + acetyl-CoA = 2-methyl-3-oxobutanoyl-CoA + CoA. It participates in lipid metabolism; fatty acid beta-oxidation. Functionally, this is one of the enzymes that catalyzes the last step of the mitochondrial beta-oxidation pathway, an aerobic process breaking down fatty acids into acetyl-CoA. Using free coenzyme A/CoA, catalyzes the thiolytic cleavage of medium- to long-chain 3-oxoacyl-CoAs into acetyl-CoA and a fatty acyl-CoA shortened by two carbon atoms. The activity of the enzyme is reversible and it can also catalyze the condensation of two acetyl-CoA molecules into acetoacetyl-CoA. Thereby, it plays a major role in ketone body metabolism. In Xenopus laevis (African clawed frog), this protein is Acetyl-CoA acetyltransferase B, mitochondrial (acat1-b).